The primary structure comprises 450 residues: Glutathione reductase (450 aa).

S14, G15, E34, T41, C42, K50, and A115 together coordinate FAD. Position 14 (S14) interacts with glutathione. C42 and C47 form a disulfide bridge. 6 residues coordinate NADP(+): A175, I178, E181, R198, R204, and G262. D303 contributes to the FAD binding site. Position 309 (D309) interacts with NADP(+). Residue T311 participates in FAD binding. Glutathione is bound at residue R319. Residue V342 coordinates NADP(+). FAD is bound at residue H439. Residue H439 is the Proton acceptor of the active site.

This sequence belongs to the class-I pyridine nucleotide-disulfide oxidoreductase family. As to quaternary structure, homodimer. Requires FAD as cofactor.

Its subcellular location is the cytoplasm. It carries out the reaction 2 glutathione + NADP(+) = glutathione disulfide + NADPH + H(+). Its function is as follows. Catalyzes the reduction of glutathione disulfide (GSSG) to reduced glutathione (GSH). Constitutes the major mechanism to maintain a high GSH:GSSG ratio in the cytosol. The sequence is that of Glutathione reductase (gor) from Streptococcus thermophilus.